Reading from the N-terminus, the 120-residue chain is CLAVATA3/ESR (CLE)-related protein 9 (120 aa).

An N-terminal signal peptide occupies residues 1–26 (MTMTHLNRLILISLLFVSLLLKSSTA). An N-linked (GlcNAc...) asparagine glycan is attached at N35. A disordered region spans residues 85–120 (RSSRKQPLLSPPPPEIDPRYGVDKRLVPSGPNPLHN). The span at 100 to 110 (IDPRYGVDKRL) shows a compositional bias: basic and acidic residues. P112 and P115 each carry hydroxyproline. A glycan (O-linked (Ara...) hydroxyproline) is linked at P115.

It belongs to the CLV3/ESR signal peptide family. In terms of processing, the O-glycosylation (arabinosylation) of the hydroxyproline Pro-115 enhances binding affinity of the CLE9p peptide for its receptor. In terms of tissue distribution, mostly expressed in leaves, flowers, stems and apex, and, to a lower extent, in seedlings, roots, siliques and pollen.

It localises to the secreted. The protein localises to the extracellular space. In terms of biological role, extracellular signal peptide that regulates cell fate. Represses root apical meristem maintenance. Regulates the transition of protophloem cells from proliferation to differentiation, thus impinging on postembryonic growth capacity of the root meristem; this signaling pathway requires CRN and CLV2. In Arabidopsis thaliana (Mouse-ear cress), this protein is CLAVATA3/ESR (CLE)-related protein 9.